The chain runs to 474 residues: Nuclear receptor ROR-alpha B (474 aa).

The segment at residues 14–89 (SIPCKICGDK…VGMSRDAVKF (76 aa)) is a DNA-binding region (nuclear receptor). 2 consecutive NR C4-type zinc fingers follow at residues 17–37 (CKIC…CEGC) and 53–72 (CPRQ…CQHC). The segment covering 98 to 124 (DSLFAEVQKHRQQQQDDKTGDESEKNQ) has biased composition (basic and acidic residues). The tract at residues 98-144 (DSLFAEVQKHRQQQQDDKTGDESEKNQESQAPGEAEPLTPSYALSSS) is disordered. One can recognise an NR LBD domain in the interval 223–461 (DLEHLSENIC…TRFPPLYKEL (239 aa)). An AF-2 region spans residues 450–461 (VHTRFPPLYKEL).

This sequence belongs to the nuclear hormone receptor family.

The protein resides in the nucleus. Its function is as follows. Nuclear receptor that binds DNA as a monomer to ROR response elements (RORE). Required for proper cerebellum development. The protein is Nuclear receptor ROR-alpha B (rorab) of Danio rerio (Zebrafish).